We begin with the raw amino-acid sequence, 570 residues long: Pantothenate kinase 2, mitochondrial (570 aa).

A mitochondrion-targeting transit peptide spans 1–31; the sequence is MRRLGPFHPRVHWAAPPSLSSGLHRLLFLRG. Disordered stretches follow at residues 34-94 and 127-198; these read IPSS…PRAR and GRLG…SVSR. A Nucleolar localization signal motif is present at residues 82–94; the sequence is RWRNGRGGRPRAR. The segment covering 84-93 has biased composition (basic residues); sequence RNGRGGRPRA. Basic and acidic residues predominate over residues 155-164; the sequence is PEGRRQEPLR. Phosphoserine is present on residues Ser-168, Ser-169, and Ser-189. Residues 168–179 are compositionally biased toward low complexity; that stretch reads SSASVPAVGASA. A Nuclear export signal motif is present at residues 268–275; the sequence is LELKDLTL. Glu-338 (proton acceptor) is an active-site residue. Acetyl-CoA is bound by residues Ser-392, Ser-395, and Arg-407.

It belongs to the type II pantothenate kinase family. As to quaternary structure, homodimer. Synthesized as a 62-kDa precursor which is proteolytically processed by the mitochondrial-processing peptidase (MPP) via a 59-kDa intermediate to yield the mature mitochondrial 48-kDa subunit. As to expression, expressed in the brain (at protein level). Ubiquitous. Highly expressed in the testis. Expressed in the umbilical vein endothelial cells (HUVEC).

The protein resides in the mitochondrion. The protein localises to the mitochondrion intermembrane space. It is found in the nucleus. It localises to the cytoplasm. The enzyme catalyses (R)-pantothenate + ATP = (R)-4'-phosphopantothenate + ADP + H(+). It participates in cofactor biosynthesis; coenzyme A biosynthesis; CoA from (R)-pantothenate: step 1/5. With respect to regulation, strongly inhibited by acetyl-CoA and its thioesters. Activated by palmitoylcarnitine. Functionally, mitochondrial isoform that catalyzes the phosphorylation of pantothenate to generate 4'-phosphopantothenate in the first and rate-determining step of coenzyme A (CoA) synthesis. Required for angiogenic activity of umbilical vein of endothelial cells (HUVEC). In terms of biological role, cytoplasmic isoform that catalyzes the phosphorylation of pantothenate to generate 4'-phosphopantothenate in the first and rate-determining step of coenzyme A (CoA) synthesis. The protein is Pantothenate kinase 2, mitochondrial (PANK2) of Homo sapiens (Human).